The chain runs to 426 residues: Histidine--tRNA ligase (426 aa).

It belongs to the class-II aminoacyl-tRNA synthetase family. Homodimer.

The protein localises to the cytoplasm. The enzyme catalyses tRNA(His) + L-histidine + ATP = L-histidyl-tRNA(His) + AMP + diphosphate + H(+). The protein is Histidine--tRNA ligase of Streptococcus gordonii (strain Challis / ATCC 35105 / BCRC 15272 / CH1 / DL1 / V288).